Here is a 156-residue protein sequence, read N- to C-terminus: Endoribonuclease YbeY (156 aa).

Zn(2+)-binding residues include H114, H118, and H124.

It belongs to the endoribonuclease YbeY family. Zn(2+) serves as cofactor.

Its subcellular location is the cytoplasm. Single strand-specific metallo-endoribonuclease involved in late-stage 70S ribosome quality control and in maturation of the 3' terminus of the 16S rRNA. The sequence is that of Endoribonuclease YbeY from Sodalis glossinidius (strain morsitans).